The chain runs to 203 residues: Holliday junction branch migration complex subunit RuvA (203 aa).

The domain I stretch occupies residues 1 to 63 (MIGQLSGKVD…EEHIHLYGFL (63 aa)). Residues 64–142 (NLEEKIFFNL…KISSGSAIIK (79 aa)) are domain II. The segment at 143–149 (ESLNIKH) is flexible linker. The tract at residues 150 to 203 (ITPVASNEVIKALVNLGFSRFEAQNAVQGIITQNPEISIDELIKTALKNRNSNF) is domain III.

Belongs to the RuvA family. As to quaternary structure, homotetramer. Forms an RuvA(8)-RuvB(12)-Holliday junction (HJ) complex. HJ DNA is sandwiched between 2 RuvA tetramers; dsDNA enters through RuvA and exits via RuvB. An RuvB hexamer assembles on each DNA strand where it exits the tetramer. Each RuvB hexamer is contacted by two RuvA subunits (via domain III) on 2 adjacent RuvB subunits; this complex drives branch migration. In the full resolvosome a probable DNA-RuvA(4)-RuvB(12)-RuvC(2) complex forms which resolves the HJ.

Its subcellular location is the cytoplasm. Functionally, the RuvA-RuvB-RuvC complex processes Holliday junction (HJ) DNA during genetic recombination and DNA repair, while the RuvA-RuvB complex plays an important role in the rescue of blocked DNA replication forks via replication fork reversal (RFR). RuvA specifically binds to HJ cruciform DNA, conferring on it an open structure. The RuvB hexamer acts as an ATP-dependent pump, pulling dsDNA into and through the RuvAB complex. HJ branch migration allows RuvC to scan DNA until it finds its consensus sequence, where it cleaves and resolves the cruciform DNA. This is Holliday junction branch migration complex subunit RuvA from Rickettsia africae (strain ESF-5).